A 113-amino-acid chain; its full sequence is EVQLQESGPSLVKPSQTLSLTCSVTGDSITSDYWNWIRKFPGNKLEHMGYISYSGSTYYNPSLKSRISITRDTSKNQYYLQLNSVTSEDTATYYCTSLRFAYWGQGTLVTVSA.

In Mus musculus (Mouse), this protein is Ig heavy chain V region 36-60.